The chain runs to 128 residues: Virion-associated protein (128 aa).

Coiled coils occupy residues 1 to 30 (MNLA…ILAK) and 37 to 58 (ESSN…EMKE). Residues 98 to 128 (FDVGNEGMGSSTNPNALKWPPTEKPQPWPPR) are disordered. The span at 119–128 (TEKPQPWPPR) shows a compositional bias: pro residues. The interval 122 to 128 (PQPWPPR) is capsid binding.

Belongs to the caulimovirus ORF III family. As to quaternary structure, homotetramer, through coiled-coil domain. Homotrimer when interacts with icosehadral capsid. Interacts with capsid protein, and with Movement protein.

The protein resides in the virion. Its subcellular location is the host cell junction. It localises to the host plasmodesma. Functionally, plays a role in virus cell-to-cell and plant-to-plant transmission. Interacts with virion icosahedral capsid and movement protein, thereby facilitating virion cell-to-cell transmission through plasmodesmata opened by viral movement protein. Also interacts with aphid transmission factor, attaching the virion to aphid stylet when the animal feeds on an virus infected plant. Aphid saliva may later detach the virion, inducing release of infectious particles when the animal feeds on a new plant. The polypeptide is Virion-associated protein (Carnation etched ring virus (CERV)).